The primary structure comprises 343 residues: Small ribosomal subunit biogenesis GTPase RsgA (343 aa).

One can recognise a CP-type G domain in the interval 116-275 (HGQLKPVAAN…LIDSPGIREF (160 aa)). GTP is bound by residues 163–166 (NKAD) and 217–225 (GQSGVGKSS). Residues Cys-299, Cys-304, His-306, and Cys-312 each contribute to the Zn(2+) site.

It belongs to the TRAFAC class YlqF/YawG GTPase family. RsgA subfamily. As to quaternary structure, monomer. Associates with 30S ribosomal subunit, binds 16S rRNA. The cofactor is Zn(2+).

The protein localises to the cytoplasm. Its function is as follows. One of several proteins that assist in the late maturation steps of the functional core of the 30S ribosomal subunit. Helps release RbfA from mature subunits. May play a role in the assembly of ribosomal proteins into the subunit. Circularly permuted GTPase that catalyzes slow GTP hydrolysis, GTPase activity is stimulated by the 30S ribosomal subunit. The protein is Small ribosomal subunit biogenesis GTPase RsgA of Pseudomonas putida (strain ATCC 700007 / DSM 6899 / JCM 31910 / BCRC 17059 / LMG 24140 / F1).